The chain runs to 213 residues: Triosephosphate isomerase (213 aa).

7 to 9 (NLK) is a binding site for substrate. Histidine 88 functions as the Electrophile in the catalytic mechanism. Glutamate 136 (proton acceptor) is an active-site residue. Residues isoleucine 141 and glycine 174 each contribute to the substrate site.

Belongs to the triosephosphate isomerase family. As to quaternary structure, homotetramer; dimer of dimers.

The protein resides in the cytoplasm. It carries out the reaction D-glyceraldehyde 3-phosphate = dihydroxyacetone phosphate. It functions in the pathway carbohydrate biosynthesis; gluconeogenesis. The protein operates within carbohydrate degradation; glycolysis; D-glyceraldehyde 3-phosphate from glycerone phosphate: step 1/1. Functionally, involved in the gluconeogenesis. Catalyzes stereospecifically the conversion of dihydroxyacetone phosphate (DHAP) to D-glyceraldehyde-3-phosphate (G3P). The chain is Triosephosphate isomerase from Thermoplasma volcanium (strain ATCC 51530 / DSM 4299 / JCM 9571 / NBRC 15438 / GSS1).